Consider the following 301-residue polypeptide: tRNA-cytidine(32) 2-sulfurtransferase (301 aa).

The short motif at 55 to 60 (SGGKDS) is the PP-loop motif element. Residues Cys130, Cys133, and Cys221 each contribute to the [4Fe-4S] cluster site.

The protein belongs to the TtcA family. In terms of assembly, homodimer. It depends on Mg(2+) as a cofactor. [4Fe-4S] cluster serves as cofactor.

Its subcellular location is the cytoplasm. It carries out the reaction cytidine(32) in tRNA + S-sulfanyl-L-cysteinyl-[cysteine desulfurase] + AH2 + ATP = 2-thiocytidine(32) in tRNA + L-cysteinyl-[cysteine desulfurase] + A + AMP + diphosphate + H(+). It functions in the pathway tRNA modification. Functionally, catalyzes the ATP-dependent 2-thiolation of cytidine in position 32 of tRNA, to form 2-thiocytidine (s(2)C32). The sulfur atoms are provided by the cysteine/cysteine desulfurase (IscS) system. The chain is tRNA-cytidine(32) 2-sulfurtransferase from Acinetobacter baylyi (strain ATCC 33305 / BD413 / ADP1).